The sequence spans 249 residues: MVTVGVFSERASLTHQLGEFIVKKQDEALQKKSDFKVSVSGGSLIDALYESLVADESLSSRVQWSKWQIYFSDERIVPLTDADSNYGAFKRAVLDKLPSTSQPNVYPMDESLIGSDAESNNKIAAEYERIVPQVLDLVLLGCGPDGHTCSLFPGETHRYLLNETTKRVAWCHDSPKPPSDRITFTLPVLKDAKALCFVAEGSSKQNIMHEIFDLKNDQLPTALVNKLFGEKTSWFVNEEAFGKVQTKTF.

Belongs to the glucosamine/galactosamine-6-phosphate isomerase family. 6-phosphogluconolactonase subfamily.

It is found in the cytoplasm. The protein resides in the nucleus. The enzyme catalyses 6-phospho-D-glucono-1,5-lactone + H2O = 6-phospho-D-gluconate + H(+). It functions in the pathway carbohydrate degradation; pentose phosphate pathway; D-ribulose 5-phosphate from D-glucose 6-phosphate (oxidative stage): step 2/3. Its function is as follows. Hydrolysis of 6-phosphogluconolactone to 6-phosphogluconate. This chain is 6-phosphogluconolactonase 3 (SOL3), found in Saccharomyces cerevisiae (strain RM11-1a) (Baker's yeast).